The sequence spans 262 residues: tRNA U34 carboxymethyltransferase (262 aa).

Carboxy-S-adenosyl-L-methionine-binding positions include Lys-25, Trp-39, Lys-44, Gly-63, 114-115 (VE), Tyr-135, and Arg-250.

This sequence belongs to the class I-like SAM-binding methyltransferase superfamily. CmoB family. As to quaternary structure, homotetramer.

It catalyses the reaction carboxy-S-adenosyl-L-methionine + 5-hydroxyuridine(34) in tRNA = 5-carboxymethoxyuridine(34) in tRNA + S-adenosyl-L-homocysteine + H(+). Functionally, catalyzes carboxymethyl transfer from carboxy-S-adenosyl-L-methionine (Cx-SAM) to 5-hydroxyuridine (ho5U) to form 5-carboxymethoxyuridine (cmo5U) at position 34 in tRNAs. In Helicobacter acinonychis (strain Sheeba), this protein is tRNA U34 carboxymethyltransferase.